An 843-amino-acid polypeptide reads, in one-letter code: Protein P (843 aa).

Residues 1–177 are terminal protein domain (TP); the sequence is MPLSYQHFRK…FCGSPYSWEQ (177 aa). The spacer stretch occupies residues 178 to 346; it reads DLQHGRLVFQ…YCLSHIVNLI (169 aa). The tract at residues 219–269 is disordered; sequence RKSRLGPQPAQGQLAGRQQGGSGSIRARVHPSPWGTVGVEPSGSGPTHNCA. Residues 223–235 are compositionally biased toward low complexity; sequence LGPQPAQGQLAGR. Residues 347 to 690 form a polymerase/reverse transcriptase domain (RT) region; it reads EDWGPCTEHG…YLNLYPVARQ (344 aa). The Reverse transcriptase domain maps to 357–600; it reads EHRIRTPRTP…YSLNFMGYVI (244 aa). Residues aspartate 429, aspartate 551, and aspartate 552 each coordinate Mg(2+).

It belongs to the hepadnaviridae P protein family.

It catalyses the reaction DNA(n) + a 2'-deoxyribonucleoside 5'-triphosphate = DNA(n+1) + diphosphate. It carries out the reaction Endonucleolytic cleavage to 5'-phosphomonoester.. With respect to regulation, activated by host HSP70 and HSP40 in vitro to be able to bind the epsilon loop of the pgRNA. Because deletion of the RNase H region renders the protein partly chaperone-independent, the chaperones may be needed indirectly to relieve occlusion of the RNA-binding site by this domain. Inhibited by several reverse-transcriptase inhibitors: Lamivudine, Adefovir and Entecavir. Functionally, multifunctional enzyme that converts the viral RNA genome into dsDNA in viral cytoplasmic capsids. This enzyme displays a DNA polymerase activity that can copy either DNA or RNA templates, and a ribonuclease H (RNase H) activity that cleaves the RNA strand of RNA-DNA heteroduplexes in a partially processive 3'- to 5'-endonucleasic mode. Neo-synthesized pregenomic RNA (pgRNA) are encapsidated together with the P protein, and reverse-transcribed inside the nucleocapsid. Initiation of reverse-transcription occurs first by binding the epsilon loop on the pgRNA genome, and is initiated by protein priming, thereby the 5'-end of (-)DNA is covalently linked to P protein. Partial (+)DNA is synthesized from the (-)DNA template and generates the relaxed circular DNA (RC-DNA) genome. After budding and infection, the RC-DNA migrates in the nucleus, and is converted into a plasmid-like covalently closed circular DNA (cccDNA). The activity of P protein does not seem to be necessary for cccDNA generation, and is presumably released from (+)DNA by host nuclear DNA repair machinery. The sequence is that of Protein P from Hepatitis B virus genotype B2 subtype adw (isolate China/patient4/1996) (HBV-B).